A 161-amino-acid chain; its full sequence is Nucleotide-binding protein BMASAVP1_A0673 (161 aa).

It belongs to the YajQ family.

Functionally, nucleotide-binding protein. The protein is Nucleotide-binding protein BMASAVP1_A0673 of Burkholderia mallei (strain SAVP1).